Consider the following 162-residue polypeptide: Nucleotide-binding protein CHU_2278 (162 aa).

This sequence belongs to the YajQ family.

Nucleotide-binding protein. In Cytophaga hutchinsonii (strain ATCC 33406 / DSM 1761 / CIP 103989 / NBRC 15051 / NCIMB 9469 / D465), this protein is Nucleotide-binding protein CHU_2278.